Reading from the N-terminus, the 948-residue chain is ATPase 8, plasma membrane-type (948 aa).

At 1–64 (MATEFSWDEI…EKSENKFLKF (64 aa)) the chain is on the cytoplasmic side. The helical transmembrane segment at 65–84 (LGFMWNPLSWVMESAAIMAI) threads the bilayer. Residues 85–96 (VLANGGGKAPDW) are Extracellular-facing. The helical transmembrane segment at 97–117 (QDFIGIMVLLIINSTISFIEE) threads the bilayer. At 118-246 (NNAGNAAAAL…GHFQKVLTSI (129 aa)) the chain is on the cytoplasmic side. The helical transmembrane segment at 247–267 (GNFCICSIGLGMLIEILIMYP) threads the bilayer. Topologically, residues 268 to 276 (IQHRTYRDG) are extracellular. A helical transmembrane segment spans residues 277–294 (IDNLLVLLIGGIPIAMPT). Residues 295-646 (VLSVTMAIGS…TSRAIFQRMK (352 aa)) are Cytoplasmic-facing. The active-site 4-aspartylphosphate intermediate is the Asp-332. Residues Asp-591 and Asp-595 each coordinate Mg(2+). A helical membrane pass occupies residues 647-668 (NYTIYAVSITIRIVLGFMLVAL). Over 669 to 673 (IWRFD) the chain is Extracellular. A helical membrane pass occupies residues 674-696 (FAPFMVLIIAILNDGTIMTISKD). Over 697–712 (RVKPSPVPDSWKLNEI) the chain is Cytoplasmic. A helical transmembrane segment spans residues 713–733 (FATGVVLGTYMALTTVLFFWL). Over 734–754 (AHDTDFFSKTFGVRSIQGNEE) the chain is Extracellular. A helical membrane pass occupies residues 755–775 (ELMAALYLQVSIISQALIFVT). Residues 776 to 787 (RSRSWSFVERPG) lie on the Cytoplasmic side of the membrane. Residues 788 to 808 (FLLLIAFVIAQLVATLIAVYA) traverse the membrane as a helical segment. Over 809–816 (NWGFARIV) the chain is Extracellular. A helical transmembrane segment spans residues 817-837 (GCGWGWAGGIWVYSIITYIPL). Residues 838 to 948 (DILKFIIRYA…IDTIQQHYTV (111 aa)) are Cytoplasmic-facing. Position 884 is a phosphothreonine (Thr-884). Position 930 is a phosphoserine (Ser-930). Positions 946-948 (YTV) are interaction with 14-3-3 proteins. Position 947 is a phosphothreonine (Thr-947).

It belongs to the cation transport ATPase (P-type) (TC 3.A.3) family. Type IIIA subfamily. Binds to 14-3-3 proteins. The binding is induced by phosphorylation of Thr-947. Binding to 14-3-3 proteins activates the H(+)-ATPase. As to expression, expressed in guard cells, roots and leaves, and barely in mesophyll cells.

It localises to the membrane. The catalysed reaction is ATP + H2O + H(+)(in) = ADP + phosphate + 2 H(+)(out). Its function is as follows. The plasma membrane H(+) ATPase of plants and fungi generates a proton gradient that drives the active transport of nutrients by H(+)-symport. The resulting external acidification and/or internal alkinization may mediate growth responses. This chain is ATPase 8, plasma membrane-type (AHA8), found in Arabidopsis thaliana (Mouse-ear cress).